A 134-amino-acid polypeptide reads, in one-letter code: Cytochrome c-type biogenesis protein CcmE (134 aa).

Over 1–7 (MKRKYRR) the chain is Cytoplasmic. The helical; Signal-anchor for type II membrane protein transmembrane segment at 8–28 (LFVVIITLSIFAGSVVLVLGK) threads the bilayer. Topologically, residues 29–134 (LKNNVSFFYT…MPNKYKTNDL (106 aa)) are periplasmic. Heme-binding residues include His120 and Tyr124.

This sequence belongs to the CcmE/CycJ family.

It is found in the cell inner membrane. Heme chaperone required for the biogenesis of c-type cytochromes. Transiently binds heme delivered by CcmC and transfers the heme to apo-cytochromes in a process facilitated by CcmF and CcmH. This is Cytochrome c-type biogenesis protein CcmE from Ehrlichia ruminantium (strain Welgevonden).